The primary structure comprises 57 residues: uncharacterized protein (57 aa).

The first 20 residues, 1 to 20 (MKKLALILFMGTLVSFYADA), serve as a signal peptide directing secretion.

This is an uncharacterized protein from Escherichia coli (strain K12).